Consider the following 329-residue polypeptide: Beta-ketoacyl-[acyl-carrier-protein] synthase III (329 aa).

Residues C123 and H256 contribute to the active site. The interval 257–261 (QANIR) is ACP-binding. N286 is a catalytic residue.

Belongs to the thiolase-like superfamily. FabH family. In terms of assembly, homodimer.

Its subcellular location is the cytoplasm. It carries out the reaction malonyl-[ACP] + acetyl-CoA + H(+) = 3-oxobutanoyl-[ACP] + CO2 + CoA. It functions in the pathway lipid metabolism; fatty acid biosynthesis. Catalyzes the condensation reaction of fatty acid synthesis by the addition to an acyl acceptor of two carbons from malonyl-ACP. Catalyzes the first condensation reaction which initiates fatty acid synthesis and may therefore play a role in governing the total rate of fatty acid production. Possesses both acetoacetyl-ACP synthase and acetyl transacylase activities. Its substrate specificity determines the biosynthesis of branched-chain and/or straight-chain of fatty acids. The chain is Beta-ketoacyl-[acyl-carrier-protein] synthase III from Burkholderia pseudomallei (strain 1710b).